The sequence spans 1162 residues: Cartilage intermediate layer protein 2 (1162 aa).

A signal peptide spans 1–20; the sequence is MASPLPLLYLCLAALHLAGA. Residues 23-51 are disordered; that stretch reads ATPTEEHTSTARGLQGRPPDTGQPSPALE. In terms of domain architecture, TSP type-1 spans 146-197; that stretch reads EAAWGAWGAWGLCSKSCGLGRRLRRRSCQSSSGDTCPGSPQEAQKCVRSRCP. 4 disulfide bridges follow: Cys158–Cys191, Cys162–Cys196, Cys173–Cys181, and Cys314–Cys360. The Ig-like C2-type domain maps to 293–377; the sequence is PYLVKHPESR…TVRSRAALLT (85 aa). The N-linked (GlcNAc...) asparagine glycan is linked to Asn330.

Post-translationally, may be cleaved into 2 chains possibly by a furin-like protease upon or preceding secretion. N-glycosylated. Expressed in articulated and meniscal cartilage (at protein level). Also detected in heart, skeletal muscle and brain. Not detected in growth plate cartilage.

The protein resides in the secreted. It localises to the extracellular space. The protein localises to the extracellular matrix. Functionally, may play a role in cartilage scaffolding. In Mus musculus (Mouse), this protein is Cartilage intermediate layer protein 2.